An 887-amino-acid chain; its full sequence is Serine/threonine-protein kinase greatwall (887 aa).

Residues 32-843 enclose the Protein kinase domain; it reads FGIVKPISRG…LKDLKAHPLF (812 aa). Residues 38 to 46 and K61 each bind ATP; that span reads ISRGAFGKV. The Proton acceptor role is filled by D155. T221 and T244 each carry phosphothreonine; by CDK1; in vitro. Positions 321–353 are disordered; that stretch reads DAEAPPYFNSSRVKDSSSEQARSKKPTGSSASQ. Position 363 is a phosphoserine; by CDK1; in vitro (S363). A disordered region spans residues 410 to 435; that stretch reads PKDFDKTGQGELGKFTSSPDSPPWLA. Phosphoserine; by CDK1; in vitro is present on S465. Positions 556 to 624 are disordered; it reads RDGEVSSTSE…EITPDNKGIP (69 aa). Over residues 575-587 the composition is skewed to polar residues; sequence QDSSSTGMSVTEN. A compositionally biased stretch (basic and acidic residues) spans 588-604; the sequence is QIDRDLSHVDKSIKELS. Residues 608 to 617 show a composition bias toward acidic residues; sequence SQSENSEEIT. Phosphoserine; by CDK1; in vitro occurs at positions 654 and 677. T748 is subject to Phosphothreonine; by CDK1. An AGC-kinase C-terminal domain is found at 844-887; that stretch reads HGMEWEELQYQPMSFIPQPDDETDTTYFEARNNAQHLKVSGFSL.

Belongs to the protein kinase superfamily. AGC Ser/Thr protein kinase family. As to quaternary structure, interacts with arpp19 and ensa, leading to their phosphorylation. In terms of processing, phosphorylation at Thr-748 by CDK1 during M phase activates its kinase activity. Not active during other phases of the cell cycle. Has the ability to autophosphorylate.

Its subcellular location is the cytoplasm. It localises to the cytoskeleton. The protein localises to the microtubule organizing center. It is found in the centrosome. The protein resides in the nucleus. It carries out the reaction L-seryl-[protein] + ATP = O-phospho-L-seryl-[protein] + ADP + H(+). The enzyme catalyses L-threonyl-[protein] + ATP = O-phospho-L-threonyl-[protein] + ADP + H(+). Functionally, serine/threonine kinase that plays a key role in M phase by acting as a regulator of mitosis entry and maintenance. Acts by promoting the inactivation of protein phosphatase 2A (PP2A) during M phase: does not directly inhibit PP2A but acts by mediating phosphorylation and subsequent activation of arpp19 and ensa at 'Ser-67', 2 phosphatase inhibitors that specifically inhibit the ppp2r2d (PR55-delta) subunit of PP2A. Inactivation of PP2A during M phase is essential to keep cyclin-B1-CDK1 activity high. Following DNA damage, it is also involved in checkpoint recovery by being inhibited. This is Serine/threonine-protein kinase greatwall (mastl) from Xenopus laevis (African clawed frog).